We begin with the raw amino-acid sequence, 418 residues long: Deoxyribonuclease Tat-D (418 aa).

A divalent metal cation is bound by residues Glu-185, His-226, His-277, and Asp-327.

It belongs to the metallo-dependent hydrolases superfamily. TatD-type hydrolase family. It depends on Mg(2+) as a cofactor.

It localises to the cytoplasm. Has both endo- and exonuclease activities. Incises double-stranded DNA without obvious specificity via its endonuclease activity and excises the DNA from the 3'-to 5'-end by its exonuclease activity. May have a role in apoptosis. This Saccharomyces cerevisiae (strain ATCC 204508 / S288c) (Baker's yeast) protein is Deoxyribonuclease Tat-D.